A 154-amino-acid chain; its full sequence is Myoglobin (154 aa).

Positions 2–148 constitute a Globin domain; it reads GLSDGEWQLV…FRNDIAAKYK (147 aa). A Phosphoserine modification is found at Ser-4. His-65 contacts nitrite. His-65 contributes to the O2 binding site. Residue Thr-68 is modified to Phosphothreonine. His-94 is a binding site for heme b.

This sequence belongs to the globin family. In terms of assembly, monomeric.

It localises to the cytoplasm. The protein localises to the sarcoplasm. The enzyme catalyses Fe(III)-heme b-[protein] + nitric oxide + H2O = Fe(II)-heme b-[protein] + nitrite + 2 H(+). The catalysed reaction is H2O2 + AH2 = A + 2 H2O. Its function is as follows. Monomeric heme protein which primary function is to store oxygen and facilitate its diffusion within muscle tissues. Reversibly binds oxygen through a pentacoordinated heme iron and enables its timely and efficient release as needed during periods of heightened demand. Depending on the oxidative conditions of tissues and cells, and in addition to its ability to bind oxygen, it also has a nitrite reductase activity whereby it regulates the production of bioactive nitric oxide. Under stress conditions, like hypoxia and anoxia, it also protects cells against reactive oxygen species thanks to its pseudoperoxidase activity. In Proechimys guairae (Guaira spiny rat), this protein is Myoglobin (MB).